The chain runs to 61 residues: Metallothionein-2D (61 aa).

N-acetylmethionine is present on Met1. Residues 1–29 (MDPNCSCATRDSCACASSCKCKECKCTSC) are beta. Residues Cys5, Cys7, Cys13, Cys15, Cys19, Cys21, Cys24, Cys26, Cys29, Cys33, Cys34, Cys36, Cys37, Cys41, Cys44, Cys48, Cys50, Cys57, Cys59, and Cys60 each coordinate a divalent metal cation. Positions 30–61 (KKSCCSCCPAGCTKCAQGCICKGASDKCSCCA) are alpha.

Belongs to the metallothionein superfamily. Type 1 family. Monomer.

Functionally, metallothioneins have a high content of cysteine residues that bind various heavy metals; these proteins are transcriptionally regulated by both heavy metals and glucocorticoids. The polypeptide is Metallothionein-2D (Oryctolagus cuniculus (Rabbit)).